The chain runs to 473 residues: Proton-coupled folate transporter (473 aa).

Pro residues predominate over residues 1-20 (MAAPSDPPTAATPPAPPPPA). Residues 1 to 21 (MAAPSDPPTAATPPAPPPPAR) are disordered. Topologically, residues 1-29 (MAAPSDPPTAATPPAPPPPARRCLLAPSV) are cytoplasmic. A helical transmembrane segment spans residues 30 to 48 (EPLLFLATLALGLQVPLAT). The Extracellular segment spans residues 49 to 90 (QYLWDRLGAERGYVGPNASSPHGCGNGSGAVDPLREEVEALV). N-linked (GlcNAc...) asparagine glycans are attached at residues asparagine 65 and asparagine 74. Cysteine 72 and cysteine 306 are oxidised to a cystine. The chain crosses the membrane as a helical span at residues 91-116 (AHWNLCINLGGFFVGLFSVTLFGPWS). Asparagine 98 serves as a coordination point for pemetrexed. The Cytoplasmic portion of the chain corresponds to 117 to 120 (DSVG). A helical membrane pass occupies residues 121 to 143 (RRPVLVLPAVGMAVQAAVYLLVM). Topologically, residues 144–148 (YLRLH) are extracellular. A helical transmembrane segment spans residues 149 to 162 (VAYLLLGRIISGLL). The Cytoplasmic portion of the chain corresponds to 163–185 (GDYNLILAGCFASVADSSNQRTR). Positions 164 and 193 each coordinate H(+). Residues 186–211 (TFRVAILEACLGVAGMVASVGGGQWR) traverse the membrane as a helical segment. Glutamate 193 is a binding site for pemetrexed. The Extracellular segment spans residues 212–216 (KAEGY). Residues 217 to 235 (INPFWLVLAASLAAALYAA) form a helical membrane-spanning segment. Topologically, residues 236 to 274 (LCLQETVKQRRAAKLLTLQHYKAVYKLYTAPEDLSSRRK) are cytoplasmic. The chain crosses the membrane as a helical span at residues 275-297 (LALYSLAFFLLVTVHFGTKDLYV). Histidine 289 serves as a coordination point for H(+). Over 298-310 (LYELGSPLCWASD) the chain is Extracellular. Residues 311–333 (LIGYGSAASYLAYLSSLGGLRLL) traverse the membrane as a helical segment. Tyrosine 323 is a binding site for pemetrexed. Topologically, residues 334-339 (QLCLED) are cytoplasmic. Residues 340–359 (TWVAEIGLISNIAGLVVISL) traverse the membrane as a helical segment. The Extracellular segment spans residues 360–363 (ATTT). A helical membrane pass occupies residues 364–384 (PLMFTGYGIMFLSMAATPVIR). Over 385 to 396 (AKLSKLVGETEQ) the chain is Cytoplasmic. Residues 397–422 (GALFASVACVEGLCSLVATGVFNSLY) traverse the membrane as a helical segment. Glutamate 407 and serine 411 together coordinate pemetrexed. Residues 423-430 (PSTLHFMR) are Extracellular-facing. Residues 431–449 (GFPFLFGAILLLIPAAIMG) traverse the membrane as a helical segment. At 450 to 473 (WIEIQDSNLQYSHFSDASSSPADG) the chain is on the cytoplasmic side.

The protein belongs to the major facilitator superfamily. SLC46A family. In terms of assembly, monomer. In terms of tissue distribution, widely expressed, including brain, aorta, liver, kidney, spleen, small intestine, pancreas, ovary and testis.

Its subcellular location is the cell membrane. It is found in the apical cell membrane. The protein resides in the basolateral cell membrane. It localises to the endosome membrane. The protein localises to the cytoplasm. The enzyme catalyses folate(in) + H(+)(in) = folate(out) + H(+)(out). It carries out the reaction (6S)-5-methyl-5,6,7,8-tetrahydrofolate(in) + H(+)(in) = (6S)-5-methyl-5,6,7,8-tetrahydrofolate(out) + H(+)(out). The catalysed reaction is methotrexate(in) + H(+)(in) = methotrexate(out) + H(+)(out). It catalyses the reaction pemetrexed(in) + H(+)(in) = pemetrexed(out) + H(+)(out). Functionally, proton-coupled folate symporter that mediates folate absorption using an H(+) gradient as a driving force. Involved in the intestinal absorption of folates at the brush-border membrane of the proximal jejunum, and the transport from blood to cerebrospinal fluid across the choroid plexus. Functions at acidic pH via alternate outward- and inward-open conformation states. Protonation of residues in the outward open state primes the protein for transport. Binding of folate promotes breaking of salt bridge network and subsequent closure of the extracellular gate, leading to the inward-open state and release of protons and folate. Also able to transport antifolate drugs, such as methotrexate and pemetrexed. Also acts as a lower-affinity, pH-independent heme carrier protein and constitutes the main importer of heme in the intestine. Imports heme in the retina and retinal pigment epithelium, in neurons of the hippocampus, in hepatocytes and in the renal epithelial cells. In Gallus gallus (Chicken), this protein is Proton-coupled folate transporter.